The following is a 321-amino-acid chain: MTAEHYSLVGDIGGTNARFALVKQGSIEPEAIEVLPCRDYENLDQAVVTYLERVGVASVRQACLAVASPLRGTRVTMTNNHWRFDIEAVRQVFGWSAFKVINDFTAMALGVPHVSDANLVHVCGGPGDPGRPKLVMGPGTGLGVSGLVPIRNGWVPLVTEGGHVDFAPTDDTEMDVLRLLRARFGRVSVERILCGQGLLNLYQAHAEIRGVAAPLDAPEKITAAAVDASDALAGEVLQHFCEMLGRTAGNSALTLGSLGGVYLCGGMLPGFLDFFLGSPFREAFVAKGRMRPLMEFTPVYVVTEPYTGLLGAAEALGNSEV.

10-15 lines the ATP pocket; sequence GDIGGT.

Belongs to the bacterial glucokinase family.

It is found in the cytoplasm. The enzyme catalyses D-glucose + ATP = D-glucose 6-phosphate + ADP + H(+). This chain is Glucokinase, found in Marinobacter nauticus (strain ATCC 700491 / DSM 11845 / VT8) (Marinobacter aquaeolei).